A 427-amino-acid polypeptide reads, in one-letter code: GTPase Obg (427 aa).

One can recognise an Obg domain in the interval 1–158 (MFIDKAKIHL…LTVTLELKLI (158 aa)). Residues 159–330 (ADVGLVGFPN…LLDYVSIKLK (172 aa)) form the OBG-type G domain. GTP-binding positions include 165 to 172 (GFPNVGKS), 190 to 194 (FTTLT), 212 to 215 (DIPG), 282 to 285 (NKTD), and 311 to 313 (SAA). The Mg(2+) site is built by Ser-172 and Thr-192. Residues 347-427 (LYELKEKDTN…IYDVEFEYFH (81 aa)) form the OCT domain.

It belongs to the TRAFAC class OBG-HflX-like GTPase superfamily. OBG GTPase family. As to quaternary structure, monomer. Requires Mg(2+) as cofactor.

The protein resides in the cytoplasm. An essential GTPase which binds GTP, GDP and possibly (p)ppGpp with moderate affinity, with high nucleotide exchange rates and a fairly low GTP hydrolysis rate. Plays a role in control of the cell cycle, stress response, ribosome biogenesis and in those bacteria that undergo differentiation, in morphogenesis control. This Alkaliphilus metalliredigens (strain QYMF) protein is GTPase Obg.